Consider the following 156-residue polypeptide: 6,7-dimethyl-8-ribityllumazine synthase (156 aa).

5-amino-6-(D-ribitylamino)uracil contacts are provided by residues Phe-22, 57-59 (AYE), and 81-83 (TVI). Position 86-87 (86-87 (GT)) interacts with (2S)-2-hydroxy-3-oxobutyl phosphate. His-89 (proton donor) is an active-site residue. Phe-114 is a binding site for 5-amino-6-(D-ribitylamino)uracil. Position 128 (Arg-128) interacts with (2S)-2-hydroxy-3-oxobutyl phosphate.

It belongs to the DMRL synthase family. Forms an icosahedral capsid composed of 60 subunits, arranged as a dodecamer of pentamers.

It catalyses the reaction (2S)-2-hydroxy-3-oxobutyl phosphate + 5-amino-6-(D-ribitylamino)uracil = 6,7-dimethyl-8-(1-D-ribityl)lumazine + phosphate + 2 H2O + H(+). The protein operates within cofactor biosynthesis; riboflavin biosynthesis; riboflavin from 2-hydroxy-3-oxobutyl phosphate and 5-amino-6-(D-ribitylamino)uracil: step 1/2. Functionally, catalyzes the formation of 6,7-dimethyl-8-ribityllumazine by condensation of 5-amino-6-(D-ribitylamino)uracil with 3,4-dihydroxy-2-butanone 4-phosphate. This is the penultimate step in the biosynthesis of riboflavin. The polypeptide is 6,7-dimethyl-8-ribityllumazine synthase (Salmonella heidelberg (strain SL476)).